Reading from the N-terminus, the 723-residue chain is Probable inactive serine/threonine-protein kinase fnkD (723 aa).

The region spanning 33–276 (WEIITQLESN…TTSLPKYSTL (244 aa)) is the Protein kinase domain. FNIP repeat units follow at residues 301 to 342 (FNQP…ELAS), 343 to 384 (FNQT…LLSS), 385 to 426 (FNQP…SLAS), 524 to 565 (FNQS…ILPS), 566 to 606 (FNHP…LGDE), and 647 to 690 (FNIE…FGIT).

The protein belongs to the protein kinase superfamily. STE Ser/Thr protein kinase family.

The protein is Probable inactive serine/threonine-protein kinase fnkD (fnkD-1) of Dictyostelium discoideum (Social amoeba).